Consider the following 105-residue polypeptide: Large ribosomal subunit protein uL24 (105 aa).

It belongs to the universal ribosomal protein uL24 family. Part of the 50S ribosomal subunit.

In terms of biological role, one of two assembly initiator proteins, it binds directly to the 5'-end of the 23S rRNA, where it nucleates assembly of the 50S subunit. Functionally, one of the proteins that surrounds the polypeptide exit tunnel on the outside of the subunit. This chain is Large ribosomal subunit protein uL24, found in Thermotoga maritima (strain ATCC 43589 / DSM 3109 / JCM 10099 / NBRC 100826 / MSB8).